The primary structure comprises 519 residues: Alkaline phosphatase, tissue-nonspecific isozyme (519 aa).

Residues 1–16 (MKAFLLTLLAQLCSAS) form the signal peptide. Aspartate 59 provides a ligand contact to Mg(2+). Positions 59 and 109 each coordinate Zn(2+). Catalysis depends on serine 109, which acts as the Phosphoserine intermediate. Cysteine 138 and cysteine 200 are joined by a disulfide. Asparagine 139 is a glycosylation site (N-linked (GlcNAc...) asparagine). A Mg(2+)-binding site is contributed by threonine 172. Asparagine 229 is a glycosylation site (N-linked (GlcNAc...) asparagine). Glutamate 234 contributes to the Ca(2+) binding site. N-linked (GlcNAc...) asparagine glycosylation is present at asparagine 278. Phenylalanine 289 and glutamate 290 together coordinate Ca(2+). N-linked (GlcNAc...) asparagine glycosylation is present at asparagine 302. Aspartate 305 provides a ligand contact to Ca(2+). A Mg(2+)-binding site is contributed by glutamate 331. Positions 336, 340, 377, and 378 each coordinate Zn(2+). N-linked (GlcNAc...) asparagine glycosylation occurs at asparagine 429. Zn(2+) is bound at residue histidine 453. A disulfide bridge connects residues cysteine 488 and cysteine 496. The GPI-anchor amidated serine moiety is linked to residue serine 498. The propeptide at 499–519 (AARPAATATLLPVLLLLLLLC) is removed in mature form.

It belongs to the alkaline phosphatase family. In terms of assembly, homodimer. Mg(2+) serves as cofactor. Requires Zn(2+) as cofactor. It depends on Ca(2+) as a cofactor.

The protein resides in the cell membrane. It is found in the extracellular vesicle membrane. It catalyses the reaction a phosphate monoester + H2O = an alcohol + phosphate. It carries out the reaction diphosphate + H2O = 2 phosphate + H(+). The enzyme catalyses pyridoxal 5'-phosphate + H2O = pyridoxal + phosphate. The catalysed reaction is phosphoethanolamine + H2O = ethanolamine + phosphate. It catalyses the reaction ATP + H2O = ADP + phosphate + H(+). It carries out the reaction ADP + H2O = AMP + phosphate + H(+). The enzyme catalyses AMP + H2O = adenosine + phosphate. Functionally, alkaline phosphatase that metabolizes various phosphate compounds and plays a key role in skeletal mineralization and adaptive thermogenesis. Has broad substrate specificity and can hydrolyze a considerable variety of compounds: however, only a few substrates, such as diphosphate (inorganic pyrophosphate; PPi) and pyridoxal 5'-phosphate (PLP) are natural substrates. Plays an essential role in skeletal and dental mineralization via its ability to hydrolyze extracellular diphosphate, a potent mineralization inhibitor, to phosphate: it thereby promotes hydroxyapatite crystal formation and increases inorganic phosphate concentration. Catalyzes dephosphorylation of PLP to pyridoxal (PL), the transportable form of vitamin B6, in order to provide a sufficient amount of PLP in the brain, an essential cofactor for enzymes catalyzing the synthesis of diverse neurotransmitters. Additionally, also able to mediate ATP degradation in a stepwise manner to adenosine, thereby regulating the availability of ligands for purinergic receptors. Involved in the establishment and growth of feather germs. The polypeptide is Alkaline phosphatase, tissue-nonspecific isozyme (ALPL) (Gallus gallus (Chicken)).